Here is an 806-residue protein sequence, read N- to C-terminus: MSDDYDPTAVAFKPGDMETDMNTGEPLALEAEAAAKDPAHNEESGEDTNANVESGTLVHQGDEPESIDKEDKVEDGPDTKSDGGVLDEPKDGEQRDDEKKEEHKPENPSEEVAEDDDYVPAAVSEPVEEDSAGGGSVGGTGIPDGAISSLAASTTIPPPSDPNQVGGGASSTSNNNNSGPDNNKRKRLATDTIGILEDRIAANPRDMPAWLDLISTIVRKEKLDESRDIYERFLALYPLSAEIWIEYITLEMDNGEFKRLEQLFGRCLTRLPNLKLWNIYLTYVRRVNVLSSESDKITEARTNIIKAFEFYLDHVGIDRESGNVWFEYLDFIKSKPATTTWEEQQKNDLTRKIYRKAIGIPLNNLSILWTAYTNFEYSLNKATARKFINEKSGSCQNARQCQTVLENLMRGLDRSSVPKSGPRDEFQVRAWKKWIDWEKSNPLGTDNKAETNKRLLYCLKQAVMSLQFVPEIWFLAAEYCFDDPLLKTEALQFLKDGLSLNPNSSLLAFRLAEYYEREADAEKMRTIYDEHIESLGKERQALIEAQGDPEAEPTAEIIKLNTQISIAYSVCMKAVKRFEGIKPGRMVFKKARNTGFATYHIYVASALMEFHHNKNPTVATNVFELGLKYCGSNAAYVQHYLDFLISLHDDTNARALFEKTIPLLGPSDAASLIKSMIKFESDFGEITSVVKLQDRLRQLNPDTSPITIIADRFATSDFDVIRQCDMLQKPKSRTDEDSDSERPSKRARRTSHGNDQGDKMEPFNLPQKIDALLRQLPNSSDYGEATFDPQRLVDLFRDVRIPDGLL.

The tract at residues 1–187 is disordered; that stretch reads MSDDYDPTAV…SGPDNNKRKR (187 aa). Composition is skewed to basic and acidic residues over residues 33-43 and 60-107; these read AAAKDPAHNEE and QGDE…KPEN. Over residues 108–118 the composition is skewed to acidic residues; the sequence is PSEEVAEDDDY. Residues 132–142 show a composition bias toward gly residues; it reads AGGGSVGGTGI. Low complexity predominate over residues 170 to 181; it reads SSTSNNNNSGPD. HAT repeat units follow at residues 221 to 253, 255 to 286, 299 to 334, 345 to 378, and 404 to 440; these read EKLD…LEMD, GEFK…YVRR, EART…FIKS, QKND…FEYS, and VLEN…WEKS. Residues 729–770 form a disordered region; that stretch reads KPKSRTDEDSDSERPSKRARRTSHGNDQGDKMEPFNLPQKID. The segment covering 732 to 744 has biased composition (basic and acidic residues); the sequence is SRTDEDSDSERPS.

It is found in the nucleus. The protein localises to the cytoplasm. Functionally, component of the cleavage factor IA (CFIA) complex, which is involved in the endonucleolytic cleavage during polyadenylation-dependent pre-mRNA 3'-end formation. The protein is mRNA 3'-end-processing protein RNA14 (RNA14) of Yarrowia lipolytica (strain CLIB 122 / E 150) (Yeast).